Here is a 1363-residue protein sequence, read N- to C-terminus: Vascular endothelial growth factor receptor 3 (1363 aa).

Residues 1-24 (MQRGAALCLRLWLCLGLLDGLVSG) form the signal peptide. The Extracellular segment spans residues 25-775 (YSMTPPTLNI…EGSEDKGSME (751 aa)). 7 Ig-like C2-type domains span residues 30–127 (PTLN…TAAS), 151–213 (KDAM…WGDQ), 219–326 (PFLV…TEVI), 331–415 (PFIS…ISLE), 422–552 (PQIH…FYVT), 555–671 (PDGF…KYLS), and 678–764 (PRLT…ASVA). 6 N-linked (GlcNAc...) asparagine glycosylation sites follow: asparagine 33, asparagine 104, asparagine 166, asparagine 251, asparagine 299, and asparagine 411. Intrachain disulfides connect cysteine 51–cysteine 111 and cysteine 158–cysteine 206. A disulfide bridge connects residues cysteine 252 and cysteine 310. 3 disulfides stabilise this stretch: cysteine 445–cysteine 534, cysteine 466–cysteine 486, and cysteine 578–cysteine 653. Asparagine 515, asparagine 527, asparagine 594, asparagine 683, and asparagine 690 each carry an N-linked (GlcNAc...) asparagine glycan. Residues cysteine 699 and cysteine 751 are joined by a disulfide bond. An N-linked (GlcNAc...) asparagine glycan is attached at asparagine 758. A helical membrane pass occupies residues 776–796 (IVILVGTGVIAVFFWVLLLLI). Residues 797 to 1363 (FCNMRRPAHA…RVTFFTDNSY (567 aa)) are Cytoplasmic-facing. Residues tyrosine 830, tyrosine 833, and tyrosine 853 each carry the phosphotyrosine; by SRC modification. The 329-residue stretch at 845-1173 (LHLGRVLGYG…ELVEILGDLL (329 aa)) folds into the Protein kinase domain. ATP is bound by residues 851–859 (LGYGAFGKV) and lysine 879. The active-site Proton acceptor is the aspartate 1037. Tyrosine 1063 is modified (phosphotyrosine; by autocatalysis and SRC). Tyrosine 1068, tyrosine 1230, tyrosine 1231, and tyrosine 1265 each carry phosphotyrosine; by autocatalysis. The tract at residues 1291–1331 (HRQESGFSCKGPGQNVAVTRAHPDSQGRRRRPERGARGGQV) is disordered. Tyrosine 1333 and tyrosine 1337 each carry phosphotyrosine; by autocatalysis and SRC. The residue at position 1363 (tyrosine 1363) is a Phosphotyrosine; by autocatalysis.

The protein belongs to the protein kinase superfamily. Tyr protein kinase family. CSF-1/PDGF receptor subfamily. As to quaternary structure, interacts with VEGFC and VEGFD. Monomer in the absence of bound VEGFC or VEGFD. Homodimer in the presence of bound VEGFC or VEGFD. Can also form a heterodimer with KDR. Interacts with PTPN14; the interaction is enhanced by stimulation with VEGFC. Interacts with CRK, GRB2, PTK2/FAK1, SHC1, PIK3R1 and PTPN11/SHP-2. Identified in a complex with SRC and ITGB1. In terms of processing, autophosphorylated on tyrosine residues upon ligand binding. Autophosphorylation occurs in trans, i.e. one subunit of the dimeric receptor phosphorylates tyrosine residues on the other subunit. Phosphorylation in response to H(2)O(2) is mediated by a process that requires SRC and PRKCD activity. Phosphorylation at Tyr-1068 is required for autophosphorylation at additional tyrosine residues. Phosphorylation at Tyr-1063 and Tyr-1337 is important for interaction with CRK and subsequent activation of MAPK8. Phosphorylation at Tyr-1230, Tyr-1231 and Tyr-1337 is important for interaction with GRB2 and subsequent activation of the AKT1 and MAPK1/ERK2 and/or MAPK3/ERK1 signaling pathways. In response to endothelial cell adhesion onto collagen, can also be phosphorylated in the absence of FLT4 kinase activity by SRC at Tyr-830, Tyr-833, Tyr-853, Tyr-1063, Tyr-1333, and Tyr-1337. In terms of tissue distribution, detected in endothelial cells (at protein level). Widely expressed. Detected in fetal spleen, lung and brain. Detected in adult liver, muscle, thymus, placenta, lung, testis, ovary, prostate, heart, and kidney.

Its subcellular location is the cell membrane. It is found in the cytoplasm. It localises to the nucleus. The protein localises to the secreted. The catalysed reaction is L-tyrosyl-[protein] + ATP = O-phospho-L-tyrosyl-[protein] + ADP + H(+). Present in an inactive conformation in the absence of bound ligand. Binding of VEGFC or VEGFD leads to dimerization and activation by autophosphorylation on tyrosine residues. Inhibited by MAZ51. Its function is as follows. Tyrosine-protein kinase that acts as a cell-surface receptor for VEGFC and VEGFD, and plays an essential role in adult lymphangiogenesis and in the development of the vascular network and the cardiovascular system during embryonic development. Promotes proliferation, survival and migration of endothelial cells, and regulates angiogenic sprouting. Signaling by activated FLT4 leads to enhanced production of VEGFC, and to a lesser degree VEGFA, thereby creating a positive feedback loop that enhances FLT4 signaling. Modulates KDR signaling by forming heterodimers. The secreted isoform 3 may function as a decoy receptor for VEGFC and/or VEGFD and play an important role as a negative regulator of VEGFC-mediated lymphangiogenesis and angiogenesis. Binding of vascular growth factors to isoform 1 or isoform 2 leads to the activation of several signaling cascades; isoform 2 seems to be less efficient in signal transduction, because it has a truncated C-terminus and therefore lacks several phosphorylation sites. Mediates activation of the MAPK1/ERK2, MAPK3/ERK1 signaling pathway, of MAPK8 and the JUN signaling pathway, and of the AKT1 signaling pathway. Phosphorylates SHC1. Mediates phosphorylation of PIK3R1, the regulatory subunit of phosphatidylinositol 3-kinase. Promotes phosphorylation of MAPK8 at 'Thr-183' and 'Tyr-185', and of AKT1 at 'Ser-473'. This chain is Vascular endothelial growth factor receptor 3 (FLT4), found in Homo sapiens (Human).